A 225-amino-acid chain; its full sequence is ATP phosphoribosyltransferase (225 aa).

It belongs to the ATP phosphoribosyltransferase family. Short subfamily. In terms of assembly, heteromultimer composed of HisG and HisZ subunits.

The protein localises to the cytoplasm. It catalyses the reaction 1-(5-phospho-beta-D-ribosyl)-ATP + diphosphate = 5-phospho-alpha-D-ribose 1-diphosphate + ATP. It functions in the pathway amino-acid biosynthesis; L-histidine biosynthesis; L-histidine from 5-phospho-alpha-D-ribose 1-diphosphate: step 1/9. In terms of biological role, catalyzes the condensation of ATP and 5-phosphoribose 1-diphosphate to form N'-(5'-phosphoribosyl)-ATP (PR-ATP). Has a crucial role in the pathway because the rate of histidine biosynthesis seems to be controlled primarily by regulation of HisG enzymatic activity. The polypeptide is ATP phosphoribosyltransferase (Herminiimonas arsenicoxydans).